The following is a 455-amino-acid chain: Phosphoglucosamine mutase (455 aa).

The active-site Phosphoserine intermediate is the serine 107. Mg(2+)-binding residues include serine 107, aspartate 247, aspartate 249, and aspartate 251. Serine 107 carries the phosphoserine modification.

This sequence belongs to the phosphohexose mutase family. It depends on Mg(2+) as a cofactor. In terms of processing, activated by phosphorylation.

It carries out the reaction alpha-D-glucosamine 1-phosphate = D-glucosamine 6-phosphate. Its function is as follows. Catalyzes the conversion of glucosamine-6-phosphate to glucosamine-1-phosphate. The chain is Phosphoglucosamine mutase from Leuconostoc citreum (strain KM20).